A 383-amino-acid polypeptide reads, in one-letter code: UDP-N-acetylenolpyruvoylglucosamine reductase (383 aa).

Positions 42–212 (LSCQAMQLIT…TRVGFKLHKD (171 aa)) constitute an FAD-binding PCMH-type domain. Arg-189 is an active-site residue. The active-site Proton donor is the Ser-267. Residue Glu-369 is part of the active site.

The protein belongs to the MurB family. The cofactor is FAD.

The protein localises to the cytoplasm. It catalyses the reaction UDP-N-acetyl-alpha-D-muramate + NADP(+) = UDP-N-acetyl-3-O-(1-carboxyvinyl)-alpha-D-glucosamine + NADPH + H(+). It participates in cell wall biogenesis; peptidoglycan biosynthesis. Cell wall formation. The protein is UDP-N-acetylenolpyruvoylglucosamine reductase of Psychrobacter sp. (strain PRwf-1).